The chain runs to 156 residues: ATP synthase subunit b (156 aa).

The helical transmembrane segment at leucine 7–proline 27 threads the bilayer.

This sequence belongs to the ATPase B chain family. In terms of assembly, F-type ATPases have 2 components, F(1) - the catalytic core - and F(0) - the membrane proton channel. F(1) has five subunits: alpha(3), beta(3), gamma(1), delta(1), epsilon(1). F(0) has three main subunits: a(1), b(2) and c(10-14). The alpha and beta chains form an alternating ring which encloses part of the gamma chain. F(1) is attached to F(0) by a central stalk formed by the gamma and epsilon chains, while a peripheral stalk is formed by the delta and b chains.

It localises to the cell inner membrane. F(1)F(0) ATP synthase produces ATP from ADP in the presence of a proton or sodium gradient. F-type ATPases consist of two structural domains, F(1) containing the extramembraneous catalytic core and F(0) containing the membrane proton channel, linked together by a central stalk and a peripheral stalk. During catalysis, ATP synthesis in the catalytic domain of F(1) is coupled via a rotary mechanism of the central stalk subunits to proton translocation. In terms of biological role, component of the F(0) channel, it forms part of the peripheral stalk, linking F(1) to F(0). The sequence is that of ATP synthase subunit b from Ralstonia pickettii (strain 12J).